A 217-amino-acid chain; its full sequence is Oxygen-insensitive NAD(P)H nitroreductase (217 aa).

10 to 14 (RYSTK) contributes to the FMN binding site. Lysine 14, threonine 41, asparagine 71, lysine 74, and arginine 107 together coordinate NAD(+). Residue asparagine 71 participates in FMN binding. FMN is bound by residues 165-166 (EG) and 205-207 (KSR).

This sequence belongs to the nitroreductase family. As to quaternary structure, homodimer. Requires FMN as cofactor.

In terms of biological role, reduction of a variety of nitroaromatic compounds using NADH (and to lesser extent NADPH) as source of reducing equivalents; two electrons are transferred. Capable of reducing nitrofurazone. The chain is Oxygen-insensitive NAD(P)H nitroreductase from Salmonella typhimurium (strain LT2 / SGSC1412 / ATCC 700720).